A 381-amino-acid polypeptide reads, in one-letter code: tRNA (guanine(26)-N(2))-dimethyltransferase (381 aa).

The Trm1 methyltransferase domain occupies 7 to 378 (IEVQEGKAKI…APYEVFIETI (372 aa)). 5 residues coordinate S-adenosyl-L-methionine: arginine 39, arginine 64, aspartate 81, aspartate 123, and alanine 124.

It belongs to the class I-like SAM-binding methyltransferase superfamily. Trm1 family.

The enzyme catalyses guanosine(26) in tRNA + 2 S-adenosyl-L-methionine = N(2)-dimethylguanosine(26) in tRNA + 2 S-adenosyl-L-homocysteine + 2 H(+). Its function is as follows. Dimethylates a single guanine residue at position 26 of a number of tRNAs using S-adenosyl-L-methionine as donor of the methyl groups. The sequence is that of tRNA (guanine(26)-N(2))-dimethyltransferase from Pyrococcus horikoshii (strain ATCC 700860 / DSM 12428 / JCM 9974 / NBRC 100139 / OT-3).